The sequence spans 414 residues: DNA primase large subunit PriL (414 aa).

[4Fe-4S] cluster is bound by residues C251, C352, C370, and C376.

It belongs to the eukaryotic-type primase large subunit family. In terms of assembly, heterodimer of a small subunit (PriS) and a large subunit (PriL). [4Fe-4S] cluster is required as a cofactor.

Its function is as follows. Regulatory subunit of DNA primase, an RNA polymerase that catalyzes the synthesis of short RNA molecules used as primers for DNA polymerase during DNA replication. Stabilizes and modulates the activity of the small subunit, increasing the rate of DNA synthesis, and conferring RNA synthesis capability. The DNA polymerase activity may enable DNA primase to also catalyze primer extension after primer synthesis. May also play a role in DNA repair. This chain is DNA primase large subunit PriL, found in Methanocaldococcus jannaschii (strain ATCC 43067 / DSM 2661 / JAL-1 / JCM 10045 / NBRC 100440) (Methanococcus jannaschii).